A 283-amino-acid polypeptide reads, in one-letter code: Large ribosomal subunit protein uL2 (283 aa).

Disordered stretches follow at residues 34-53 and 224-283; these read TEPYKKKGGRNNYGRITARH and AMNP…KKKK. The segment covering 232 to 245 has biased composition (gly residues); it reads NGGGQGKSKGGGGW. Over residues 256 to 268 the composition is skewed to basic residues; sequence AKGKKTRHKRKNS.

It belongs to the universal ribosomal protein uL2 family. In terms of assembly, part of the 50S ribosomal subunit. Forms a bridge to the 30S subunit in the 70S ribosome.

Functionally, one of the primary rRNA binding proteins. Required for association of the 30S and 50S subunits to form the 70S ribosome, for tRNA binding and peptide bond formation. It has been suggested to have peptidyltransferase activity; this is somewhat controversial. Makes several contacts with the 16S rRNA in the 70S ribosome. This Methylacidiphilum infernorum (isolate V4) (Methylokorus infernorum (strain V4)) protein is Large ribosomal subunit protein uL2.